The following is a 137-amino-acid chain: Sporulation-specific cell division protein SsgB (137 aa).

This sequence belongs to the SsgA family. In terms of assembly, interacts with SsgA. Interacts with FtsZ (via N-terminus).

The protein resides in the cell septum. In terms of biological role, involved in sporulation-specific cell division. Required for early stages of sporulation. Important in the process of growth cessation prior to sporulation-specific cell division. Recruits cell division protein FtsZ to the future septum sites and tethers the contractile ring structure (Z ring) to the cytoplasmic membrane during sporulation. Stimulates polymerization and filament length of FtsZ in vitro. This Streptomyces coelicolor (strain ATCC BAA-471 / A3(2) / M145) protein is Sporulation-specific cell division protein SsgB.